Reading from the N-terminus, the 409-residue chain is Type II methyltransferase M.BsuFI (409 aa).

Residues 101 to 402 (LTFIDLFAGI…GAMKERLLLA (302 aa)) enclose the SAM-dependent MTase C5-type domain. Cysteine 170 is a catalytic residue.

Belongs to the class I-like SAM-binding methyltransferase superfamily. C5-methyltransferase family.

It carries out the reaction a 2'-deoxycytidine in DNA + S-adenosyl-L-methionine = a 5-methyl-2'-deoxycytidine in DNA + S-adenosyl-L-homocysteine + H(+). A methylase, recognizes the double-stranded sequence 5'-CCGG-3', methylates C-1 on both strands, and protects the DNA from cleavage by the BsuFI endonuclease. This Bacillus subtilis protein is Type II methyltransferase M.BsuFI (hsdFM).